Consider the following 442-residue polypeptide: D-serine dehydratase (442 aa).

Residue Lys118 is modified to N6-(pyridoxal phosphate)lysine.

The protein belongs to the serine/threonine dehydratase family. DsdA subfamily. Monomer. The cofactor is pyridoxal 5'-phosphate.

It carries out the reaction D-serine = pyruvate + NH4(+). The chain is D-serine dehydratase from Citrobacter koseri (strain ATCC BAA-895 / CDC 4225-83 / SGSC4696).